A 344-amino-acid chain; its full sequence is Golgi-associated RAB2 interactor protein 1B (344 aa).

The protein belongs to the GARIN family.

It localises to the golgi apparatus. In terms of biological role, RAB2B effector protein required for accurate acrosome formation and normal male fertility. In complex with RAB2A/RAB2B, seems to suppress excessive vesicle trafficking during acrosome formation. The protein is Golgi-associated RAB2 interactor protein 1B (Garin1b) of Rattus norvegicus (Rat).